Consider the following 316-residue polypeptide: Taste receptor type 2 member 3 (316 aa).

Residues 1 to 7 (MLGFTEG) are Extracellular-facing. A helical transmembrane segment spans residues 8 to 28 (IFLVLTVTEFILGNLVNGFIV). The Cytoplasmic segment spans residues 29-50 (SVNGSHWFKSKKISLSDFIITS). A helical transmembrane segment spans residues 51–71 (LALFRIFLLWIIFTDSLIIVF). Residues 72–86 (SYHTHDSGIRMQLID) lie on the Extracellular side of the membrane. The chain crosses the membrane as a helical span at residues 87–107 (VFWTFTNHFSIWLISCLSVFY). Residues 108-128 (CLKIATFSHPSFLWLKWRASR) are Cytoplasmic-facing. The helical transmembrane segment at 129 to 149 (VVVGMLWGALVLSCVCTMSLM) threads the bilayer. Residues 150–186 (NEFKIYSALTGSRDTQNMTEYIRLKRHEYNLMHVLGN) lie on the Extracellular side of the membrane. An N-linked (GlcNAc...) asparagine glycan is attached at Asn-166. A helical transmembrane segment spans residues 187–207 (LWKIPSLIVSLIAYFLLLLSL). Residues 208-234 (GKHTQQMQKYSVGSRDQSAEAHRRAMR) lie on the Cytoplasmic side of the membrane. Residues 235–255 (IILSFLLFFLFYFLSFVILSS) traverse the membrane as a helical segment. The Extracellular segment spans residues 256-266 (SRFLPETKIAR). Residues 267–287 (IIGVVITMSYLVGDSLILILG) traverse the membrane as a helical segment. At 288–316 (NNKLKQTFVAILPCECGHPKPGSKRFFAS) the chain is on the cytoplasmic side.

The protein belongs to the G-protein coupled receptor T2R family.

It localises to the membrane. Its function is as follows. Gustducin-coupled receptor implicated in the perception of bitter compounds in the oral cavity and the gastrointestinal tract. Signals through PLCB2 and the calcium-regulated cation channel TRPM5. This Rattus norvegicus (Rat) protein is Taste receptor type 2 member 3.